The sequence spans 825 residues: NT-3 growth factor receptor (825 aa).

The N-terminal stretch at 1 to 31 (MDVSLCPAKCSFWRIFLLGSVWLDYVGSVLA) is a signal peptide. 2 cysteine pairs are disulfide-bonded: cysteine 32–cysteine 38 and cysteine 36–cysteine 45. The Extracellular segment spans residues 32 to 429 (CPANCVCSKT…TVTHKPEEDT (398 aa)). 3 N-linked (GlcNAc...) asparagine glycosylation sites follow: asparagine 68, asparagine 72, and asparagine 79. 2 LRR repeats span residues 104-125 (GLQKLTIKNSGLRSIQPRAFAK) and 128-149 (HLRYINLSSNRLTTLSWQLFQT). Asparagine 133 and asparagine 163 each carry an N-linked (GlcNAc...) asparagine glycan. In terms of domain architecture, LRRCT spans 160–209 (NFFNCSCDIRWMQLWQEQGEAKLNSQSLYCISADGSQLPLFRMNISQCDL). 2 cysteine pairs are disulfide-bonded: cysteine 164/cysteine 189 and cysteine 166/cysteine 207. Residues asparagine 203, asparagine 218, asparagine 232, asparagine 259, asparagine 267, asparagine 272, and asparagine 294 are each glycosylated (N-linked (GlcNAc...) asparagine). 2 consecutive Ig-like C2-type domains span residues 210–300 (PEIS…VALT) and 309–382 (SLEE…NRQE). Cysteine 231 and cysteine 284 are disulfide-bonded. An intrachain disulfide couples cysteine 320 to cysteine 362. Asparagine 375 and asparagine 388 each carry an N-linked (GlcNAc...) asparagine glycan. The chain crosses the membrane as a helical span at residues 430-453 (FGVSIAVGLAAFACVLLVVLFIMI). Over 454–825 (NKYGRRSKFG…ATPIYLDILG (372 aa)) the chain is Cytoplasmic. Position 516 is a phosphotyrosine; by autocatalysis (tyrosine 516). The Protein kinase domain occupies 538-814 (IVLKRELGEG…EIYKILHALG (277 aa)). ATP-binding positions include 544–552 (LGEGAFGKV) and lysine 572. Aspartate 679 serves as the catalytic Proton acceptor. Residues tyrosine 705, tyrosine 709, tyrosine 710, and tyrosine 820 each carry the phosphotyrosine; by autocatalysis modification.

It belongs to the protein kinase superfamily. Tyr protein kinase family. Insulin receptor subfamily. As to quaternary structure, exists in a dynamic equilibrium between monomeric (low affinity) and dimeric (high affinity) structures. Binds SH2B2. Interacts with SQSTM1 and KIDINS220. Interacts with PTPRS. Interacts with MAPK8IP3/JIP3. Ligand-mediated auto-phosphorylation. Preferentially in the brain, low levels in the ovaries.

The protein localises to the membrane. It catalyses the reaction L-tyrosyl-[protein] + ATP = O-phospho-L-tyrosyl-[protein] + ADP + H(+). Functionally, receptor tyrosine kinase involved in nervous system and probably heart development. Upon binding of its ligand NTF3/neurotrophin-3, NTRK3 autophosphorylates and activates different signaling pathways, including the phosphatidylinositol 3-kinase/AKT and the MAPK pathways, that control cell survival and differentiation. In Sus scrofa (Pig), this protein is NT-3 growth factor receptor (NTRK3).